Here is a 174-residue protein sequence, read N- to C-terminus: Crossover junction endodeoxyribonuclease RuvC (174 aa).

Catalysis depends on residues D8, E67, and D139. 3 residues coordinate Mg(2+): D8, E67, and D139.

It belongs to the RuvC family. In terms of assembly, homodimer which binds Holliday junction (HJ) DNA. The HJ becomes 2-fold symmetrical on binding to RuvC with unstacked arms; it has a different conformation from HJ DNA in complex with RuvA. In the full resolvosome a probable DNA-RuvA(4)-RuvB(12)-RuvC(2) complex forms which resolves the HJ. Requires Mg(2+) as cofactor.

The protein resides in the cytoplasm. The enzyme catalyses Endonucleolytic cleavage at a junction such as a reciprocal single-stranded crossover between two homologous DNA duplexes (Holliday junction).. Its function is as follows. The RuvA-RuvB-RuvC complex processes Holliday junction (HJ) DNA during genetic recombination and DNA repair. Endonuclease that resolves HJ intermediates. Cleaves cruciform DNA by making single-stranded nicks across the HJ at symmetrical positions within the homologous arms, yielding a 5'-phosphate and a 3'-hydroxyl group; requires a central core of homology in the junction. The consensus cleavage sequence is 5'-(A/T)TT(C/G)-3'. Cleavage occurs on the 3'-side of the TT dinucleotide at the point of strand exchange. HJ branch migration catalyzed by RuvA-RuvB allows RuvC to scan DNA until it finds its consensus sequence, where it cleaves and resolves the cruciform DNA. The chain is Crossover junction endodeoxyribonuclease RuvC from Pseudomonas putida (strain ATCC 47054 / DSM 6125 / CFBP 8728 / NCIMB 11950 / KT2440).